The following is an 835-amino-acid chain: Ubiquitin carboxyl-terminal hydrolase 26 (835 aa).

The disordered stretch occupies residues 102 to 128; the sequence is SQGSIRPARSDERCGEPSTSAQELNGS. Polar residues predominate over residues 118–128; it reads PSTSAQELNGS. The 531-residue stretch at 286-816 folds into the USP domain; sequence QGLPNVGNTC…TGYVFFYMHN (531 aa). Catalysis depends on C295, which acts as the Nucleophile. The interval 597 to 747 is disordered; that stretch reads NRESEAQSGK…TRKVDPTKLN (151 aa). 2 stretches are compositionally biased toward basic and acidic residues: residues 634-652 and 669-679; these read LTKETEKLKKHEEEHRPSD and KCNEGRSDKQI. The span at 683–708 shows a compositional bias: polar residues; the sequence is ALTQSRPKPISQEQTENLGKTTLSHT. Low complexity predominate over residues 709 to 725; the sequence is QDSSQSSQSSSDSSKSS. The span at 726–747 shows a compositional bias: basic and acidic residues; that stretch reads RCSDDLDKKAKPTRKVDPTKLN. Catalysis depends on H771, which acts as the Proton acceptor.

The protein belongs to the peptidase C19 family. As to quaternary structure, interacts with RING1.

The protein localises to the nucleus. The protein resides in the cytoplasm. It localises to the cytoskeleton. It is found in the flagellum axoneme. It catalyses the reaction Thiol-dependent hydrolysis of ester, thioester, amide, peptide and isopeptide bonds formed by the C-terminal Gly of ubiquitin (a 76-residue protein attached to proteins as an intracellular targeting signal).. In terms of biological role, deubiquitinase regulating several biological processes through the deubiquitination of components of these processes. Involved in somatic cell reprogramming through the 'Lys-48'-linked deubiquitination and stabilization of CBX4 and CBX6, two components of the polycomb-repressive complex 1 (PRC1). Also deubiquitinates and probably stabilizes the androgen receptor (AR), regulating the androgen receptor signaling pathway. May play a role in spermatogenesis. This chain is Ubiquitin carboxyl-terminal hydrolase 26, found in Mus musculus (Mouse).